The sequence spans 180 residues: UPF0227 protein YcfP (180 aa).

This sequence belongs to the UPF0227 family.

The protein is UPF0227 protein YcfP of Salmonella arizonae (strain ATCC BAA-731 / CDC346-86 / RSK2980).